We begin with the raw amino-acid sequence, 319 residues long: Major intracellular serine protease (319 aa).

The propeptide occupies 1 to 17 (MNGEIRLIPYVTNEQIM). In terms of domain architecture, Peptidase S8 spans 23-307 (PEGIKVIKAP…FLYLTAPDEL (285 aa)). Catalysis depends on charge relay system residues aspartate 50, histidine 87, and serine 246.

It belongs to the peptidase S8 family. As to quaternary structure, homodimer.

It is found in the cytoplasm. Major intracellular protease produced by Bacillus subtilis. The sequence is that of Major intracellular serine protease (isp) from Bacillus subtilis (strain 168).